Consider the following 900-residue polypeptide: E3 ubiquitin-protein ligase BRE1-like 2 (900 aa).

Residues Met1 to Pro31 form a disordered region. A compositionally biased stretch (polar residues) spans Val20 to Pro31. Coiled coils occupy residues Thr63–Asn96, Glu217–Ala300, Ser437–Glu660, and Ser706–Lys737. The segment at Cys848 to Gly887 adopts an RING-type zinc-finger fold.

The protein belongs to the BRE1 family. In terms of assembly, may act as a tetramer consisting of two copies of HUB1 and two copies of HUB2. In terms of tissue distribution, ubiquitously expressed.

The protein localises to the nucleus. The catalysed reaction is S-ubiquitinyl-[E2 ubiquitin-conjugating enzyme]-L-cysteine + [acceptor protein]-L-lysine = [E2 ubiquitin-conjugating enzyme]-L-cysteine + N(6)-ubiquitinyl-[acceptor protein]-L-lysine.. It participates in protein modification; protein ubiquitination. Functionally, E3 ubiquitin-protein ligase that monoubiquitinates H2B to form H2BK143ub1. H2BK143ub1 gives a specific tag for epigenetic transcriptional activation and is also prerequisite for H3K4me and maybe H3K79me. It thereby plays a central role in histone code and gene regulation. Forms a ubiquitin ligase complex in cooperation with the E2 enzyme UBC2/RAD6. The chain is E3 ubiquitin-protein ligase BRE1-like 2 (HUB2) from Arabidopsis thaliana (Mouse-ear cress).